Here is a 54-residue protein sequence, read N- to C-terminus: Potassium channel toxin alpha-KTx 14.x (54 aa).

A signal peptide spans 1–23 (MKIFFAILLILAVCSMAIWTVNG). 3 cysteine pairs are disulfide-bonded: cysteine 30-cysteine 46, cysteine 36-cysteine 51, and cysteine 40-cysteine 53.

It belongs to the short scorpion toxin superfamily. Potassium channel inhibitor family. Alpha-KTx 14 subfamily. In terms of tissue distribution, expressed by the venom gland.

The protein localises to the secreted. Its function is as follows. Potassium channels inhibitor. The chain is Potassium channel toxin alpha-KTx 14.x from Olivierus martensii (Manchurian scorpion).